The chain runs to 167 residues: Small heat shock protein C1 (167 aa).

The region spanning 59–167 (PFYESNSIKS…EQDAKEIPIN (109 aa)) is the sHSP domain.

It belongs to the small heat shock protein (HSP20) family.

The polypeptide is Small heat shock protein C1 (hspC1) (Rickettsia bellii (strain RML369-C)).